Reading from the N-terminus, the 61-residue chain is Small ribosomal subunit protein uS14 (61 aa).

Zn(2+)-binding residues include Cys24, Cys27, Cys40, and Cys43.

This sequence belongs to the universal ribosomal protein uS14 family. Zinc-binding uS14 subfamily. As to quaternary structure, part of the 30S ribosomal subunit. Contacts proteins S3 and S10. It depends on Zn(2+) as a cofactor.

Binds 16S rRNA, required for the assembly of 30S particles and may also be responsible for determining the conformation of the 16S rRNA at the A site. This chain is Small ribosomal subunit protein uS14, found in Acidithiobacillus ferrooxidans (strain ATCC 23270 / DSM 14882 / CIP 104768 / NCIMB 8455) (Ferrobacillus ferrooxidans (strain ATCC 23270)).